The primary structure comprises 340 residues: Solute carrier family 35 member G3 (340 aa).

The tract at residues proline 11 to asparagine 31 is disordered. Transmembrane regions (helical) follow at residues threonine 39 to phenylalanine 59, leucine 69 to leucine 89, phenylalanine 107 to valine 127, alanine 160 to glycine 180, leucine 189 to leucine 209, threonine 223 to leucine 243, cysteine 257 to threonine 277, leucine 283 to leucine 303, and valine 307 to alanine 327. The EamA 1 domain occupies leucine 51–glycine 176. The 105-residue stretch at threonine 223–alanine 327 folds into the EamA 2 domain.

This sequence belongs to the SLC35G solute transporter family.

It localises to the membrane. The chain is Solute carrier family 35 member G3 (Slc35g3) from Rattus norvegicus (Rat).